An 86-amino-acid polypeptide reads, in one-letter code: MKSDIHPAYRQVAFHDTTADAYFIVGSTIKTDRTVQYEGKELPYVPLDVSSASHVYYTGKQKDFAKEGSAARFNQRFGSFLGAMKK.

It belongs to the bacterial ribosomal protein bL31 family. Type B subfamily. Part of the 50S ribosomal subunit.

The sequence is that of Large ribosomal subunit protein bL31B from Erwinia tasmaniensis (strain DSM 17950 / CFBP 7177 / CIP 109463 / NCPPB 4357 / Et1/99).